We begin with the raw amino-acid sequence, 355 residues long: UDP-N-acetylglucosamine--N-acetylmuramyl-(pentapeptide) pyrophosphoryl-undecaprenol N-acetylglucosamine transferase (355 aa).

Residues 11-13 (TGG), Asn-120, Arg-161, Ser-188, and Gln-280 each bind UDP-N-acetyl-alpha-D-glucosamine.

Belongs to the glycosyltransferase 28 family. MurG subfamily.

Its subcellular location is the cell inner membrane. The catalysed reaction is di-trans,octa-cis-undecaprenyl diphospho-N-acetyl-alpha-D-muramoyl-L-alanyl-D-glutamyl-meso-2,6-diaminopimeloyl-D-alanyl-D-alanine + UDP-N-acetyl-alpha-D-glucosamine = di-trans,octa-cis-undecaprenyl diphospho-[N-acetyl-alpha-D-glucosaminyl-(1-&gt;4)]-N-acetyl-alpha-D-muramoyl-L-alanyl-D-glutamyl-meso-2,6-diaminopimeloyl-D-alanyl-D-alanine + UDP + H(+). Its pathway is cell wall biogenesis; peptidoglycan biosynthesis. Functionally, cell wall formation. Catalyzes the transfer of a GlcNAc subunit on undecaprenyl-pyrophosphoryl-MurNAc-pentapeptide (lipid intermediate I) to form undecaprenyl-pyrophosphoryl-MurNAc-(pentapeptide)GlcNAc (lipid intermediate II). The sequence is that of UDP-N-acetylglucosamine--N-acetylmuramyl-(pentapeptide) pyrophosphoryl-undecaprenol N-acetylglucosamine transferase from Prochlorococcus marinus (strain MIT 9211).